Reading from the N-terminus, the 214-residue chain is MALSEAAVKVQAALLERGLETPMLPSVYSSEERKDKIEHHMKEILTLMSLDLSDDSLADTPRRIAKMYVDEIFSGLDYENFPKITVIDNKMGFDEMVRVQDISLTSTCEHHLVTIDGTATIAYLPRKKIIGLSKINRIVRFFAQRPQVQERLTQQVLVALQTLLETKDVAVKMDAVHYCVKSRGVMDSTSSTTTTALGGIFKSNPATRAEFLHQ.

C108, H111, and C179 together coordinate Zn(2+).

The protein belongs to the GTP cyclohydrolase I family. As to quaternary structure, toroid-shaped homodecamer, composed of two pentamers of five dimers.

It carries out the reaction GTP + H2O = 7,8-dihydroneopterin 3'-triphosphate + formate + H(+). The protein operates within cofactor biosynthesis; 7,8-dihydroneopterin triphosphate biosynthesis; 7,8-dihydroneopterin triphosphate from GTP: step 1/1. The sequence is that of GTP cyclohydrolase 1 from Shewanella putrefaciens (strain CN-32 / ATCC BAA-453).